A 247-amino-acid chain; its full sequence is Probable transcriptional regulatory protein lpl1249 (247 aa).

The protein belongs to the TACO1 family.

The protein resides in the cytoplasm. This chain is Probable transcriptional regulatory protein lpl1249, found in Legionella pneumophila (strain Lens).